Reading from the N-terminus, the 202-residue chain is Peptidyl-tRNA hydrolase (202 aa).

Y16 provides a ligand contact to tRNA. Catalysis depends on H21, which acts as the Proton acceptor. 3 residues coordinate tRNA: Y68, N70, and N116.

It belongs to the PTH family. Monomer.

It is found in the cytoplasm. It carries out the reaction an N-acyl-L-alpha-aminoacyl-tRNA + H2O = an N-acyl-L-amino acid + a tRNA + H(+). Functionally, hydrolyzes ribosome-free peptidyl-tRNAs (with 1 or more amino acids incorporated), which drop off the ribosome during protein synthesis, or as a result of ribosome stalling. Catalyzes the release of premature peptidyl moieties from peptidyl-tRNA molecules trapped in stalled 50S ribosomal subunits, and thus maintains levels of free tRNAs and 50S ribosomes. The polypeptide is Peptidyl-tRNA hydrolase (Treponema pallidum (strain Nichols)).